The chain runs to 280 residues: NLP effector protein Pc553546 (280 aa).

A signal peptide spans 1-19 (MNLVAALVLCFALLSSVRG). Residues 123–129 (AGRHDWA) carry the Hepta-peptide GHRHDWE motif motif. Asn142 and Asn209 each carry an N-linked (GlcNAc...) asparagine glycan.

The protein belongs to the Necrosis inducing protein (NPP1) family.

It localises to the secreted. Functionally, secreted effector that contributes strongly to virulence during infection by P.capsici. The sequence is that of NLP effector protein Pc553546 from Phytophthora capsici.